The following is a 724-amino-acid chain: MGALTWLSVVAAAASTALAMTPEKMISAPRRSEVIPNPSGEIGVFSTSQYSFEKHKRSSWWSLLDLKTGQSKILTNDSSVSEILWLGTDDSTLLYVNGTNADVPGGVELWVTQVSSFTNGYKAASLPAAFSGFKTVTTKSGDIRFVAYAQSYANGTAYNEELVEKPLSSARIYDSIYVRHWDSYLTTTFNAVFSGTLKKGNNKKGYTLDGAVKNLVSPVRNAESPYPPFGGASDYDLSPNGKWVAFKSKAPELPKANFTTAYIYLVPHDGSEKAFAINGPDSPGTPKGIKGDANSPVFSPNSEKLAYLQMKDETYEADRRVLYVYSIGSKKTIPSVAGNWDRSPDSIKWTPDGKTLIVGSEDKGRSRLFAIPATARDDFKPKNFTDGGAVSAYYFLPDRSLLVTGTAIWTNWNVYTASPAKGVIKTLASANEIDPELKGLGPSDVSEIYFKGNWTDIHAWVVYPENFDKSKKYPLAFLIHGGPQGSWADSWSSRWNPKTFADQGYVVVAPNPTGSTGFGQKLTDEIQNNWGGAPYDDLVKCWEYVNKNLPFVDTEHGIAAGASYGGFMVNWIQGNDLGRRFKALVSHDGTFVADAKISTDELWFMQREFNGTFWDARDNYRRFDPSAPEHIRQFGTPQLVIHNDKDYRLAVAEGLSLFNVLQERGVPSRFLNFPDENHWVVNPENSLVWHQQVLGWINKYSGIEKSNPGAVSLDDTIVPVVNYN.

An N-terminal signal peptide occupies residues 1–19; it reads MGALTWLSVVAAAASTALA. Asn-76, Asn-97, Asn-154, Asn-257, Asn-383, and Asn-453 each carry an N-linked (GlcNAc...) asparagine glycan. Catalysis depends on Ser-563, which acts as the Charge relay system. Asn-610 carries N-linked (GlcNAc...) asparagine glycosylation. Residues Asp-646 and His-678 each act as charge relay system in the active site.

This sequence belongs to the peptidase S9C family.

It is found in the secreted. Extracellular dipeptidyl-peptidase which removes N-terminal dipeptides sequentially from polypeptides having unsubstituted N-termini. The protein is Probable dipeptidyl-peptidase 5 (dpp5) of Aspergillus clavatus (strain ATCC 1007 / CBS 513.65 / DSM 816 / NCTC 3887 / NRRL 1 / QM 1276 / 107).